A 197-amino-acid polypeptide reads, in one-letter code: Phosphoheptose isomerase (197 aa).

In terms of domain architecture, SIS spans 36 to 197 (MVQCLVSEGK…IDQQLFGSTE (162 aa)). Residue 51–53 (NGG) participates in substrate binding. Residues His-60 and Glu-64 each coordinate Zn(2+). Residues Glu-64, 93 to 94 (ND), 119 to 121 (STS), Ser-124, and Gln-174 contribute to the substrate site. 2 residues coordinate Zn(2+): Gln-174 and His-182.

This sequence belongs to the SIS family. GmhA subfamily. In terms of assembly, homotetramer. Zn(2+) is required as a cofactor.

It localises to the cytoplasm. The enzyme catalyses 2 D-sedoheptulose 7-phosphate = D-glycero-alpha-D-manno-heptose 7-phosphate + D-glycero-beta-D-manno-heptose 7-phosphate. It participates in carbohydrate biosynthesis; D-glycero-D-manno-heptose 7-phosphate biosynthesis; D-glycero-alpha-D-manno-heptose 7-phosphate and D-glycero-beta-D-manno-heptose 7-phosphate from sedoheptulose 7-phosphate: step 1/1. In terms of biological role, catalyzes the isomerization of sedoheptulose 7-phosphate in D-glycero-D-manno-heptose 7-phosphate. The sequence is that of Phosphoheptose isomerase from Chromohalobacter salexigens (strain ATCC BAA-138 / DSM 3043 / CIP 106854 / NCIMB 13768 / 1H11).